The sequence spans 759 residues: DNA topoisomerase 3 (759 aa).

The 145-residue stretch at 3–147 folds into the Toprim domain; it reads RALFVAEKND…RLDIFRARFS (145 aa). A Topo IA-type catalytic domain is found at 165–590; sequence DEKTVAAVDC…EQIGKYRAIF (426 aa). The O-(5'-phospho-DNA)-tyrosine intermediate role is filled by tyrosine 334. The tract at residues 609 to 715 is disordered; it reads DKNNQAGGGP…KEQEEEEEVF (107 aa). The segment covering 614–639 has biased composition (gly residues); the sequence is AGGGPGGPGGGGGPPRGPGGGGGGGP. Over residues 640 to 649 the composition is skewed to pro residues; sequence TGPPAPPKPP. Zn(2+)-binding residues include cysteine 716, cysteine 718, cysteine 743, and cysteine 753. A GRF-type zinc finger spans residues 716–759; the sequence is CQCPEPMRAVTKVVQKEGPNKGKKFYTCSLPYTSSEKCNFFKWA.

The protein belongs to the type IA topoisomerase family. In terms of assembly, component of the BTR double Holliday Junction dissolution complex composed of at least him-6, top-3, rmh-1 and rmif-2, which is involved in double strand break repair in the germline. May interact with rmh-1.

It localises to the nucleus. The catalysed reaction is ATP-independent breakage of single-stranded DNA, followed by passage and rejoining.. Functionally, component of the BTR double Holliday Junction dissolution complex, which is involved in homologous recombination during meiotic double strand break in the germline. Releases the supercoiling and torsional tension of DNA introduced during the DNA replication and transcription by transiently cleaving and rejoining one strand of the DNA duplex. Introduces a single-strand break via transesterification at a target site in duplex DNA. The scissile phosphodiester is attacked by the catalytic tyrosine of the enzyme, resulting in the formation of a DNA-(5'-phosphotyrosyl)-enzyme intermediate and the expulsion of a 3'-OH DNA strand. The free DNA strand than undergoes passage around the unbroken strand thus removing DNA supercoils. Finally, in the religation step, the DNA 3'-OH attacks the covalent intermediate to expel the active-site tyrosine and restore the DNA phosphodiester backbone. This Caenorhabditis elegans protein is DNA topoisomerase 3.